Reading from the N-terminus, the 228-residue chain is UPF0758 protein STER_1430 (228 aa).

The region spanning Q103–D225 is the MPN domain. Zn(2+)-binding residues include H174, H176, and D187. The JAMM motif motif lies at H174–D187.

This sequence belongs to the UPF0758 family.

This chain is UPF0758 protein STER_1430, found in Streptococcus thermophilus (strain ATCC BAA-491 / LMD-9).